We begin with the raw amino-acid sequence, 565 residues long: Transmembrane 7 superfamily member 3 (565 aa).

An N-terminal signal peptide occupies residues 1 to 21 (MWRLRLLVLAVLAAGSAEAQA). N-linked (GlcNAc...) asparagine glycosylation is found at Asn22, Asn56, Asn70, and Asn259. 7 helical membrane-spanning segments follow: residues 287–307 (VSTK…CFFG), 311–331 (WKTE…YILI), 341–361 (VRLV…VASW), 364–384 (FGIL…LVSS), 402–422 (VFWV…LGCL), 427–447 (ILAC…SYMF), and 478–498 (NDYI…TLQI).

The protein resides in the cell membrane. Functionally, involved in the inhibition of cytokine-induced death of pancreatic beta cells. Involved in the promotion of insulin secretion from pancreatic beta cells. Is a downstream transcriptional target of p53/TP53, and acts as a pro-survival homeostatic factor that attenuates the development of cellular stress. Maintains protein homeostasis and promotes cell survival through attenuation of endoplasmic reticulum (ER) stress and the subsequent induction of unfolded protein response (UPR). This chain is Transmembrane 7 superfamily member 3 (Tm7sf3), found in Rattus norvegicus (Rat).